A 349-amino-acid polypeptide reads, in one-letter code: Putative transport protein YhhT (349 aa).

The Cytoplasmic segment spans residues 1 to 10 (METPQPDKTG). Residues 11-31 (MHILLKLASLVVILAGIHAAA) traverse the membrane as a helical segment. D32 is a topological domain (periplasmic). The chain crosses the membrane as a helical span at residues 33 to 53 (IIVQLLLALFFAIVLNPLVTW). The Cytoplasmic portion of the chain corresponds to 54-62 (FIRRGVQRP). A helical transmembrane segment spans residues 63–83 (VAITIVVVVMLIALTALVGVL). The Periplasmic portion of the chain corresponds to 84–142 (AASFNEFISMLPKFNKELTRKLFKLQEMLPFLNLHMSPERMLQRMDSEKVVTFTTALMT). A helical membrane pass occupies residues 143-163 (GLSGAMASVLLLVMTVVFMLF). The Cytoplasmic portion of the chain corresponds to 164-208 (EVRHVPYKMRFALNNPQIHIAGLHRALKGVSHYLALKTLLSLWTG). The chain crosses the membrane as a helical span at residues 209-229 (VIVWLGLELMGVQFALMWAVL). The Periplasmic segment spans residues 230–234 (AFLLN). Residues 235–255 (YVPNIGAVISAVPPMIQVLLF) traverse the membrane as a helical segment. At 256–257 (NG) the chain is on the cytoplasmic side. The helical transmembrane segment at 258–278 (VYECILVGALFLVVHMVIGNI) threads the bilayer. Residues 279 to 292 (LEPRMMGHRLGMST) lie on the Periplasmic side of the membrane. The helical transmembrane segment at 293-313 (MVVFLSLLIWGWLLGPVGMLL) threads the bilayer. Residues 314–349 (SVPLTSVCKIWMETTKGGSKLAILLGPGRPKSRLPG) are Cytoplasmic-facing.

This sequence belongs to the autoinducer-2 exporter (AI-2E) (TC 2.A.86) family.

The protein resides in the cell inner membrane. In Escherichia coli O157:H7, this protein is Putative transport protein YhhT (yhhT).